The primary structure comprises 262 residues: 2-aminoethylphosphonate dioxygenase (262 aa).

Lysine 108 serves as a coordination point for 2-oxoglutarate. Histidine 118, aspartate 120, and histidine 198 together coordinate Fe cation.

It belongs to the PhyH family. Requires Fe(2+) as cofactor.

It catalyses the reaction (2-aminoethyl)phosphonate + 2-oxoglutarate + O2 = (1R)-(2-amino-1-hydroxyethyl)phosphonate + succinate + CO2. Activity is enhanced by ascorbate. Its function is as follows. Involved in the degradation of the organophosphonate 2-aminoethylphosphonic acid (2-AEP). Catalyzes the hydroxylation of 2-aminoethylphosphonic acid to yield (2-amino-1-hydroxyethyl)phosphonic acid. The sequence is that of 2-aminoethylphosphonate dioxygenase from Uncultured bacterium HF130_AEPn_1.